The chain runs to 1388 residues: Dicer-like protein 2 (1388 aa).

A Helicase ATP-binding domain is found at 23–203 (MLEASMKENI…LLMVESNLDA (181 aa)). 36–43 (MDTGSGKT) serves as a coordination point for ATP. A DEAH box motif is present at residues 144–147 (DEAH). A Helicase C-terminal domain is found at 368–537 (KFESLLNFLD…DDERQLQSVS (170 aa)). The Dicer dsRNA-binding fold domain maps to 564–658 (AMAHLHHFCA…LPLTKKPELK (95 aa)). RNase III domains lie at 906–1059 (ISAI…VDGG) and 1098–1281 (NDRL…VDSG). Mg(2+) contacts are provided by E1137, D1267, and E1270.

This sequence belongs to the helicase family. Dicer subfamily. Mg(2+) is required as a cofactor. The cofactor is Mn(2+).

In terms of biological role, dicer-like endonuclease involved in cleaving double-stranded RNA in the RNA interference (RNAi) pathway. Produces 21 to 25 bp dsRNAs (siRNAs) which target the selective destruction of homologous RNAs leading to sequence-specific suppression of gene expression, called post-transcriptional gene silencing (PTGS). Part of a broad host defense response against viral infection and transposons. This is Dicer-like protein 2 (dcl2) from Aspergillus fumigatus (strain ATCC MYA-4609 / CBS 101355 / FGSC A1100 / Af293) (Neosartorya fumigata).